Consider the following 108-residue polypeptide: Small ribosomal subunit protein uS17 (108 aa).

It belongs to the universal ribosomal protein uS17 family. Part of the 30S ribosomal subunit.

In terms of biological role, one of the primary rRNA binding proteins, it binds specifically to the 5'-end of 16S ribosomal RNA. The polypeptide is Small ribosomal subunit protein uS17 (Methanoculleus marisnigri (strain ATCC 35101 / DSM 1498 / JR1)).